A 259-amino-acid chain; its full sequence is Potassium/proton antiporter CemA (259 aa).

4 helical membrane passes run 47–67 (CLLVLPWVISILLQKSIEPWV), 136–156 (IITHLFTNFIGFALLSTYLVM), 184–204 (ILLATDLCIGFHSPHGWELLI), and 219–239 (IISSLVSTFPVILDTIFKYWI).

The protein belongs to the CemA family.

Its subcellular location is the plastid. The protein localises to the chloroplast inner membrane. The enzyme catalyses K(+)(in) + H(+)(out) = K(+)(out) + H(+)(in). Its function is as follows. Contributes to K(+)/H(+) antiport activity by supporting proton efflux to control proton extrusion and homeostasis in chloroplasts in a light-dependent manner to modulate photosynthesis. Prevents excessive induction of non-photochemical quenching (NPQ) under continuous-light conditions. Indirectly promotes efficient inorganic carbon uptake into chloroplasts. The polypeptide is Potassium/proton antiporter CemA (Welwitschia mirabilis (Tree tumbo)).